Consider the following 295-residue polypeptide: Glucose-1-phosphate thymidylyltransferase (295 aa).

Positions 111 and 226 each coordinate Mg(2+).

The protein belongs to the glucose-1-phosphate thymidylyltransferase family. In terms of assembly, homotetramer. Requires Mg(2+) as cofactor.

The enzyme catalyses dTTP + alpha-D-glucose 1-phosphate + H(+) = dTDP-alpha-D-glucose + diphosphate. It participates in carbohydrate biosynthesis; dTDP-L-rhamnose biosynthesis. Its pathway is bacterial outer membrane biogenesis; LPS O-antigen biosynthesis. Catalyzes the formation of dTDP-glucose, from dTTP and glucose 1-phosphate, as well as its pyrophosphorolysis. This is Glucose-1-phosphate thymidylyltransferase (rmlA) from Xanthomonas campestris pv. campestris (strain B100).